We begin with the raw amino-acid sequence, 307 residues long: Elongation factor Ts (307 aa).

An involved in Mg(2+) ion dislocation from EF-Tu region spans residues 80–83 (TDFV).

Belongs to the EF-Ts family.

It localises to the cytoplasm. In terms of biological role, associates with the EF-Tu.GDP complex and induces the exchange of GDP to GTP. It remains bound to the aminoacyl-tRNA.EF-Tu.GTP complex up to the GTP hydrolysis stage on the ribosome. This is Elongation factor Ts from Rhodospirillum centenum (strain ATCC 51521 / SW).